Consider the following 489-residue polypeptide: N-succinylglutamate 5-semialdehyde dehydrogenase 1 (489 aa).

NAD(+) is bound at residue 223-228 (GSSRTG). Active-site residues include glutamate 246 and cysteine 280.

The protein belongs to the aldehyde dehydrogenase family. AstD subfamily.

The catalysed reaction is N-succinyl-L-glutamate 5-semialdehyde + NAD(+) + H2O = N-succinyl-L-glutamate + NADH + 2 H(+). The protein operates within amino-acid degradation; L-arginine degradation via AST pathway; L-glutamate and succinate from L-arginine: step 4/5. Its function is as follows. Catalyzes the NAD-dependent reduction of succinylglutamate semialdehyde into succinylglutamate. The sequence is that of N-succinylglutamate 5-semialdehyde dehydrogenase 1 from Pseudoalteromonas translucida (strain TAC 125).